Reading from the N-terminus, the 461-residue chain is Argininosuccinate lyase (461 aa).

Positions 28, 115, and 160 each coordinate 2-(N(omega)-L-arginino)succinate. Residue His161 is the Proton acceptor of the active site. The active-site Proton donor is Ser282. 4 residues coordinate 2-(N(omega)-L-arginino)succinate: Asn290, Tyr322, Gln327, and Lys330.

It belongs to the lyase 1 family. Argininosuccinate lyase subfamily. In terms of assembly, homotetramer.

It catalyses the reaction 2-(N(omega)-L-arginino)succinate = fumarate + L-arginine. It participates in amino-acid biosynthesis; L-arginine biosynthesis; L-arginine from L-ornithine and carbamoyl phosphate: step 3/3. The sequence is that of Argininosuccinate lyase (arg7) from Schizosaccharomyces pombe (strain 972 / ATCC 24843) (Fission yeast).